The chain runs to 699 residues: MSASASVGGPVPQPPPGPAAALPPGSAARALHVELPSQQRRLRHLRNIAARNIVNRNGHQLLDTYFTLHLCSTEKIYKEFYRSEVIKNSLNPTWRSLDFGIMPDRLDTSVSCFVVKIWGGKENIYQLLIEWKVCLDGLKYLGQQIHARNQNEIIFGLNDGYYGAPFEHKGYSNAQKTILLQVDQNCVRNSYDVFSLLRLHRAQCAIKQTQVTVQKIGKEIEEKLRLTSTSNELKKKSECLQLKILVLQNELERQKKALGREVALLHKQQIALQDKGSAFSAEHLKLQLQKESLNELRKECTAKRELFLKTNAQLTIRCRQLLSELSYIYPIDLNEHKDYFVCGVKLPNSEDFQAKDDGSIAVALGYTAHLVSMISFFLQVPLRYPIIHKGSRSTIKDNINDKLTEKEREFPLYPKGGEKLQFDYGVYLLNKNIAQLRYQHGLGTPDLRQTLPNLKNFMEHGLMVRCDRHHTSSAIPVPKRQSSIFGGADVGFSGGIPSPDKGHRKRASSENERLQYKTPPPSYNSALAQPVTTVPSMGETERKITSLSSSLDTSLDFSKENKKKGEDLVGSLNGGHANVHPSQEQGEALSGHRATVNGTLLPSEQAGSASVQLPGEFHPVSEAELCCTVEQAEEIIGLEATGFASGDQLEAFNCIPVDSAVAVECDEQVLGEFEEFSRRIYALNENVSSFRRPRRSSDK.

The span at 1–10 shows a compositional bias: low complexity; it reads MSASASVGGP. The segment at 1 to 24 is disordered; that stretch reads MSASASVGGPVPQPPPGPAAALPP. One can recognise a C2 domain in the interval 23–149; the sequence is PPGSAARALH…YLGQQIHARN (127 aa). The tract at residues 200 to 269 is sufficient for interaction with STX7; VTI1B AND STX8; sequence HRAQCAIKQT…REVALLHKQQ (70 aa). The stretch at 224 to 305 forms a coiled coil; it reads LRLTSTSNEL…LRKECTAKRE (82 aa). A sufficient for interaction with VPS16, required for interaction with CEP63 region spans residues 270 to 442; sequence IALQDKGSAF…IAQLRYQHGL (173 aa). Positions 443–699 are required for interaction with PRKDC, XRCC6 and XRCC5; sequence GTPDLRQTLP…FRRPRRSSDK (257 aa). Positions 486 to 591 are disordered; the sequence is GGADVGFSGG…SQEQGEALSG (106 aa). Position 493 is a phosphoserine (serine 493). Serine 498 is modified (phosphoserine; by MTOR). Serine 508 bears the Phosphoserine mark. Threonine 518 carries the post-translational modification Phosphothreonine. Serine 522 carries the post-translational modification Phosphoserine. The span at 523-535 shows a compositional bias: polar residues; sequence YNSALAQPVTTVP. Positions 545–556 are enriched in low complexity; it reads TSLSSSLDTSLD. Phosphoserine occurs at positions 549 and 550. Residues 557-567 are compositionally biased toward basic and acidic residues; it reads FSKENKKKGED. Residues serine 571, serine 582, and serine 689 each carry the phosphoserine modification.

Component of the PI3K (PI3KC3/PI3K-III/class III phosphatidylinositol 3-kinase) complex II (PI3KC3-C2) in which the core composed of the catalytic subunit PIK3C3, the regulatory subunit PIK3R4 and BECN1 is associated with UVRAG; in the complex interacts directly with BECN1. PI3KC3-C2 can associate with further regulatory subunits such as RUBCN and probably SH3GLB1/Bif-1. Interacts with SH3GLB1; UVRAG bridges the interaction to BECN1 indicative for an association with the PI3K complex PI3KC3-C2. Interacts with RINT1. Associates with the NRZ complex under basal conditions and dissociates from it under autophagy conditions to associate with the PI3K complex; these complex associations seem to be mutually exclusive. Interacts with VPS16; VPS11; VPS18; VPS33 (VPS33A or VPS33B) and VPS39; indicative for an association with a class C Vps tethering complex (possibly the HOPS complex). Interacts with RAB7A; RAB7A competes with UVRAG for RUBCN binding. Interacts with STX7, VTI1B, STX8. Interacts with PRKDC, XRCC6 and XRCC5; indicative for an association with the DNA-dependent protein kinase complex DNA-PK. Interacts with CEP63. Directly interacts with FEZ1 and SCOC; the interaction with SCOC is reduced by amino acid starvation, but the complex is stabilized in the presence of FEZ1. Interacts with BECN1P1/BECN2. Interacts with SLAMF1. Interacts with RUBCNL/PACER; promoting targeting of UVRAG to autophagosome. Interacts with WNK1. Post-translationally, phosphorylated at Ser-498 by MTOR under basal conditions; increases the interaction with RUBCN implicated in inhibitory effect of RUBCN on PI3KC3 and decreases interaction with RAB7,A and VPS16 and VPS39 (indicative for a class C Vps complex, possibly the HOPS complex). Highly expressed in brain, lung, kidney and liver.

The protein resides in the late endosome. Its subcellular location is the lysosome. The protein localises to the cytoplasmic vesicle. It is found in the autophagosome. It localises to the early endosome. The protein resides in the endoplasmic reticulum. Its subcellular location is the midbody. The protein localises to the chromosome. It is found in the centromere. Versatile protein that is involved in regulation of different cellular pathways implicated in membrane trafficking. Involved in regulation of the COPI-dependent retrograde transport from Golgi and the endoplasmic reticulum by associating with the NRZ complex; the function is dependent on its binding to phosphatidylinositol 3-phosphate (PtdIns(3)P). During autophagy acts as a regulatory subunit of the alternative PI3K complex II (PI3KC3-C2) that mediates formation of phosphatidylinositol 3-phosphate and is believed to be involved in maturation of autophagosomes and endocytosis. Activates lipid kinase activity of PIK3C3. Involved in the regulation of degradative endocytic trafficking and cytokinesis, and in regulation of ATG9A transport from the Golgi to the autophagosome; the functions seems to implicate its association with PI3KC3-C2. Involved in maturation of autophagosomes and degradative endocytic trafficking independently of BECN1 but depending on its association with a class C Vps complex (possibly the HOPS complex); the association is also proposed to promote autophagosome recruitment and activation of Rab7 and endosome-endosome fusion events. Enhances class C Vps complex (possibly HOPS complex) association with a SNARE complex and promotes fusogenic SNARE complex formation during late endocytic membrane fusion. In case of negative-strand RNA virus infection is required for efficient virus entry, promotes endocytic transport of virions and is implicated in a VAMP8-specific fusogenic SNARE complex assembly. Functionally, involved in maintaining chromosomal stability. Promotes DNA double-strand break (DSB) repair by association with DNA-dependent protein kinase complex DNA-PK and activating it in non-homologous end joining (NHEJ). Required for centrosome stability and proper chromosome segregation. In Homo sapiens (Human), this protein is UV radiation resistance-associated gene protein (UVRAG).